The chain runs to 271 residues: Protein FAM110D (271 aa).

Disordered regions lie at residues M1–S83, P116–A145, and P186–V245. The segment covering R68–L78 has biased composition (basic residues). Residues P116–S126 are compositionally biased toward low complexity. Residues S220–E231 show a composition bias toward gly residues.

This sequence belongs to the FAM110 family.

The chain is Protein FAM110D (FAM110D) from Homo sapiens (Human).